A 212-amino-acid polypeptide reads, in one-letter code: Cytochrome c biogenesis ATP-binding export protein CcmA (212 aa).

One can recognise an ABC transporter domain in the interval 8-212; sequence LQATALACER…RSIDLAKGSA (205 aa). 40–47 provides a ligand contact to ATP; it reads GPNGSGKT.

It belongs to the ABC transporter superfamily. CcmA exporter (TC 3.A.1.107) family. As to quaternary structure, the complex is composed of two ATP-binding proteins (CcmA) and two transmembrane proteins (CcmB).

Its subcellular location is the cell inner membrane. The catalysed reaction is heme b(in) + ATP + H2O = heme b(out) + ADP + phosphate + H(+). Part of the ABC transporter complex CcmAB involved in the biogenesis of c-type cytochromes; once thought to export heme, this seems not to be the case, but its exact role is uncertain. Responsible for energy coupling to the transport system. In Pseudomonas syringae pv. tomato (strain ATCC BAA-871 / DC3000), this protein is Cytochrome c biogenesis ATP-binding export protein CcmA.